The chain runs to 606 residues: MSTASAASSSSSSSAGEMIEAPSQVLNFEEIDYKEIEVEEVVGRGAFGVVCKAKWRAKDVAIKQIESESERKAFIVELRQLSRVNHPNIVKLYGACLNPVCLVMEYAEGGSLYNVLHGAEPLPYYTAAHAMSWCLQCSQGVAYLHSMQPKALIHRDLKPPNLLLVAGGTVLKICDFGTACDIQTHMTNNKGSAAWMAPEVFEGSNYSEKCDVFSWGIILWEVITRRKPFDEIGGPAFRIMWAVHNGTRPPLIKNLPKPIESLMTRCWSKDPSQRPSMEEIVKIMTHLMRYFPGADEPLQYPCQYSDEGQSNSATSTGSFMDIASTNTSNKSDTNMEQVPATNDTIKRLESKLLKNQAKQQSESGRLSLGASRGSSVESLPPTSEGKRMSADMSEIEARIAATTAYSKPKRGHRKTASFGNILDVPEIVISGNGQPRRRSIQDLTVTGTEPGQVSSRSSSPSVRMITTSGPTSEKPTRSHPWTPDDSTDTNGSDNSIPMAYLTLDHQLQPLAPCPNSKESMAVFEQHCKMAQEYMKVQTEIALLLQRKQELVAELDQDEKDQQNTSRLVQEHKKLLDENKSLSTYYQQCKKQLEVIRSQQQKRQGTS.

The interval 1-300 (MSTASAASSS…FPGADEPLQY (300 aa)) is interaction with MAPK8IP1. The 256-residue stretch at 36 to 291 (IEVEEVVGRG…KIMTHLMRYF (256 aa)) folds into the Protein kinase domain. Residues 42-50 (VGRGAFGVV) and Lys-63 each bind ATP. A Glycyl lysine isopeptide (Lys-Gly) (interchain with G-Cter in ubiquitin) cross-link involves residue Lys-72. Asp-156 acts as the Proton acceptor in catalysis. Lys-158 participates in a covalent cross-link: Glycyl lysine isopeptide (Lys-Gly) (interchain with G-Cter in ubiquitin). Residues Thr-184 and Thr-187 each carry the (Microbial infection) O-acetylthreonine; by Yersinia YopJ; alternate modification. Thr-184 and Thr-187 each carry phosphothreonine; by autocatalysis; alternate. Phosphoserine; by autocatalysis is present on Ser-192. A Glycyl lysine isopeptide (Lys-Gly) (interchain with G-Cter in ubiquitin) cross-link involves residue Lys-209. Residues 301–338 (PCQYSDEGQSNSATSTGSFMDIASTNTSNKSDTNMEQV) are disordered. Polar residues predominate over residues 306 to 338 (DEGQSNSATSTGSFMDIASTNTSNKSDTNMEQV). (Microbial infection) O-acetylthreonine; by Yersinia YopJ; alternate is present on Thr-341. The interval 354–391 (KNQAKQQSESGRLSLGASRGSSVESLPPTSEGKRMSAD) is disordered. The segment covering 361–375 (SESGRLSLGASRGSS) has biased composition (low complexity). Residues Ser-367, Ser-389, and Ser-439 each carry the phosphoserine modification. A compositionally biased stretch (polar residues) spans 443 to 452 (LTVTGTEPGQ). Residues 443–493 (LTVTGTEPGQVSSRSSSPSVRMITTSGPTSEKPTRSHPWTPDDSTDTNGSD) form a disordered region. 3 positions are modified to (Microbial infection) O-acetylthreonine; by Yersinia YopJ; alternate: Thr-444, Thr-446, and Thr-448. Residues 453 to 463 (VSSRSSSPSVR) are compositionally biased toward low complexity. Ser-455 is subject to Phosphoserine. Over residues 464-473 (MITTSGPTSE) the composition is skewed to polar residues. Thr-467 carries the (Microbial infection) O-acetylthreonine; by Yersinia YopJ; alternate modification.

The protein belongs to the protein kinase superfamily. STE Ser/Thr protein kinase family. MAP kinase kinase kinase subfamily. In terms of assembly, can form homodimer. Binds both upstream activators and downstream substrates in multimolecular complexes. Interacts with TAB1/MAP3K7IP1, TAB2/MAP3K7IP2 and TAB3/MAP3K7IP3. Identified in the TRIKA2 complex composed of MAP3K7/TAK1, TAB1/MAP3K7IP1 and TAB2/MAP3K7IP2. Interacts with PPM1L and PPM1B/PP2CB. Interaction with PP2A and PPP6C leads to its repressed activity. Interacts with TRAF6 and TAB1/MAP3K7IP1; during IL-1 signaling. Interacts with TAOK1 and TAOK2; interaction with TAOK2 interferes with MAP3K7 interaction with IKKA, thus preventing NF-kappa-B activation. Interacts with DYNC2I2 (via WD domains). Interacts with CYLD and RBCK1. Interacts with TGFBR1; induces MAP3K7/TAK1 activation by TRAF6. Interacts with MAPK8IP1 and SMAD6. Interacts with isoform 1 of VRK2. Interacts with DAB2; the interaction is induced by TGF-beta stimulation and may mediate TGF-beta stimulated JNK activation. Interacts with TRIM5. Part of a complex containing ITCH, NDFIP1 and MAP3K7. Interacts with IFIT5; the interaction synergizes the recruitment of IKK to MAP3K7 and enhances IKK phosphorylation. Interacts with PLEKHM1 (via N- and C-terminus). Interacts with TRIM8. Found in a complex with SH3RF1, RAC2, MAP2K7/MKK7, MAPK8IP1/JIP1, MAPK8/JNK1 and MAPK9/JNK2. Interacts with SASH1. Interacts with RIPK1. As to quaternary structure, (Microbial infection) Interacts with herpes simplex virus 2 protein US2; this interaction induces MAP3K7 phosphorylation and subsequent activation. Mg(2+) serves as cofactor. Post-translationally, association with TAB1/MAP3K7IP1 promotes autophosphorylation at Ser-192 and subsequent activation. Association with TAB2/MAP3K7IP2, itself associated with free unanchored Lys-63 polyubiquitin chain, promotes autophosphorylation and subsequent activation of MAP3K7. Dephosphorylation at Ser-192 by PPM1B/PP2CB and at Thr-187 by PP2A and PPP6C leads to inactivation. In terms of processing, 'Lys-48'-linked polyubiquitination at Lys-72 is induced by TNFalpha, and leads to proteasomal degradation. Undergoes 'Lys-48'-linked polyubiquitination catalyzed by ITCH. Requires 'Lys-63'-linked polyubiquitination for autophosphorylation and subsequent activation. 'Lys-63'-linked ubiquitination does not lead to proteasomal degradation. Deubiquitinated by CYLD, a protease that selectively cleaves 'Lys-63'-linked ubiquitin chains. Deubiquitinated by Y.enterocolitica YopP. Deubiquitinated by USP19; leading to negative regulation of TNF-alpha- and IL-1beta-triggered NF-kappa-B activation. (Microbial infection) Cleaved and inactivated by the proteases 3C of coxsackievirus A16 and human enterovirus D68, allowing the virus to disrupt TRAF6-triggered NF-kappa-B induction. Post-translationally, (Microbial infection) Acetylation of Thr-184 and Thr-187 by Yersinia YopJ prevents phosphorylation and activation, thus blocking the MAPK signaling pathway. Isoform 1A is the most abundant in ovary, skeletal muscle, spleen and blood mononuclear cells. Isoform 1B is highly expressed in brain, kidney and small intestine. Isoform 1C is the major form in prostate. Isoform 1D is the less abundant form.

It is found in the cytoplasm. The protein resides in the cell membrane. The enzyme catalyses L-seryl-[protein] + ATP = O-phospho-L-seryl-[protein] + ADP + H(+). It carries out the reaction L-threonyl-[protein] + ATP = O-phospho-L-threonyl-[protein] + ADP + H(+). Activated by pro-inflammatory cytokines and in response to physical and chemical stresses, including osmotic stress, oxidative stress, arsenic and ultraviolet light irradiation. Activated by 'Lys-63'-linked polyubiquitination and by autophosphorylation. Association with TAB1/MAP3K7IP1 and TAB2/MAP3K7IP2 promotes activation through autophosphorylation, whereas PPM1B/PP2CB, PP2A and PPP6C dephosphorylation leads to inactivation. Ceramides are also able to activate MAP3K7/TAK1. In terms of biological role, serine/threonine kinase which acts as an essential component of the MAP kinase signal transduction pathway. Plays an important role in the cascades of cellular responses evoked by changes in the environment. Mediates signal transduction of TRAF6, various cytokines including interleukin-1 (IL-1), transforming growth factor-beta (TGFB), TGFB-related factors like BMP2 and BMP4, toll-like receptors (TLR), tumor necrosis factor receptor CD40 and B-cell receptor (BCR). Once activated, acts as an upstream activator of the MKK/JNK signal transduction cascade and the p38 MAPK signal transduction cascade through the phosphorylation and activation of several MAP kinase kinases like MAP2K1/MEK1, MAP2K3/MKK3, MAP2K6/MKK6 and MAP2K7/MKK7. These MAP2Ks in turn activate p38 MAPKs and c-jun N-terminal kinases (JNKs); both p38 MAPK and JNK pathways control the transcription factors activator protein-1 (AP-1). Independently of MAP2Ks and p38 MAPKs, acts as a key activator of NF-kappa-B by promoting activation of the I-kappa-B-kinase (IKK) core complex. Mechanistically, recruited to polyubiquitin chains of RIPK2 and IKBKG/NEMO via TAB2/MAP3K7IP2 and TAB3/MAP3K7IP3, and catalyzes phosphorylation and activation of IKBKB/IKKB component of the IKK complex, leading to NF-kappa-B activation. In osmotic stress signaling, plays a major role in the activation of MAPK8/JNK1, but not that of NF-kappa-B. Promotes TRIM5 capsid-specific restriction activity. Phosphorylates RIPK1 at 'Ser-321' which positively regulates RIPK1 interaction with RIPK3 to promote necroptosis but negatively regulates RIPK1 kinase activity and its interaction with FADD to mediate apoptosis. Phosphorylates STING1 in response to cGAMP-activation, promoting association between STEEP1 and STING1 and STING1 translocation to COPII vesicles. In Homo sapiens (Human), this protein is Mitogen-activated protein kinase kinase kinase 7.